We begin with the raw amino-acid sequence, 144 residues long: uncharacterized protein (144 aa).

Positions Met-1 to Tyr-23 are cleaved as a signal peptide.

This is an uncharacterized protein from Archaeoglobus fulgidus (strain ATCC 49558 / DSM 4304 / JCM 9628 / NBRC 100126 / VC-16).